A 341-amino-acid chain; its full sequence is Phenylalanine--tRNA ligase alpha subunit (341 aa).

Residue Glu259 coordinates Mg(2+).

The protein belongs to the class-II aminoacyl-tRNA synthetase family. Phe-tRNA synthetase alpha subunit type 1 subfamily. As to quaternary structure, tetramer of two alpha and two beta subunits. Mg(2+) is required as a cofactor.

The protein localises to the cytoplasm. It catalyses the reaction tRNA(Phe) + L-phenylalanine + ATP = L-phenylalanyl-tRNA(Phe) + AMP + diphosphate + H(+). This is Phenylalanine--tRNA ligase alpha subunit from Mycobacterium bovis (strain ATCC BAA-935 / AF2122/97).